A 457-amino-acid chain; its full sequence is Argininosuccinate lyase (457 aa).

This sequence belongs to the lyase 1 family. Argininosuccinate lyase subfamily.

The protein localises to the cytoplasm. It carries out the reaction 2-(N(omega)-L-arginino)succinate = fumarate + L-arginine. The protein operates within amino-acid biosynthesis; L-arginine biosynthesis; L-arginine from L-ornithine and carbamoyl phosphate: step 3/3. The sequence is that of Argininosuccinate lyase from Shigella boydii serotype 18 (strain CDC 3083-94 / BS512).